Here is a 131-residue protein sequence, read N- to C-terminus: Small ribosomal subunit protein uS8 (131 aa).

Belongs to the universal ribosomal protein uS8 family. Part of the 30S ribosomal subunit. Contacts proteins S5 and S12.

Its function is as follows. One of the primary rRNA binding proteins, it binds directly to 16S rRNA central domain where it helps coordinate assembly of the platform of the 30S subunit. The polypeptide is Small ribosomal subunit protein uS8 (Paraburkholderia phymatum (strain DSM 17167 / CIP 108236 / LMG 21445 / STM815) (Burkholderia phymatum)).